The following is a 221-amino-acid chain: Alpha-ketoglutarate-dependent dioxygenase alkB homolog 7, mitochondrial (221 aa).

The transit peptide at M1–S23 directs the protein to the mitochondrion. Fe cation is bound by residues H121 and D123. Y165 serves as a coordination point for 2-oxoglutarate. H177 is a binding site for Fe cation. 2-oxoglutarate-binding positions include R197–S199 and R203.

Belongs to the alkB family. Requires Fe(2+) as cofactor. Widely expressed.

The protein resides in the mitochondrion matrix. Its function is as follows. May function as protein hydroxylase; can catalyze auto-hydroxylation at Leu-110 (in vitro), but this activity may be due to the absence of the true substrate. Required to induce programmed necrosis in response to DNA damage caused by cytotoxic alkylating agents. Acts by triggering the collapse of mitochondrial membrane potential and loss of mitochondrial function that leads to energy depletion and cell death. ALKBH7-mediated necrosis is probably required to prevent the accumulation of cells with DNA damage. Does not display DNA demethylase activity. Involved in fatty acid metabolism. The protein is Alpha-ketoglutarate-dependent dioxygenase alkB homolog 7, mitochondrial (Alkbh7) of Mus musculus (Mouse).